A 473-amino-acid polypeptide reads, in one-letter code: Siroheme synthase 2 (473 aa).

The segment at 1–204 (MDYFPIFCQL…NDHVQADQHV (204 aa)) is precorrin-2 dehydrogenase /sirohydrochlorin ferrochelatase. NAD(+) contacts are provided by residues 22–23 (EI) and 43–44 (CE). The residue at position 128 (Ser-128) is a Phosphoserine. The tract at residues 216–473 (GEVVLVGAGP…KVTECVAHVG (258 aa)) is uroporphyrinogen-III C-methyltransferase. An S-adenosyl-L-methionine-binding site is contributed by Pro-225. Catalysis depends on Asp-248, which acts as the Proton acceptor. The Proton donor role is filled by Lys-270. Residues 301–303 (GGD), Ile-306, 331–332 (TA), Met-382, and Gly-411 contribute to the S-adenosyl-L-methionine site.

This sequence in the N-terminal section; belongs to the precorrin-2 dehydrogenase / sirohydrochlorin ferrochelatase family. It in the C-terminal section; belongs to the precorrin methyltransferase family.

The catalysed reaction is uroporphyrinogen III + 2 S-adenosyl-L-methionine = precorrin-2 + 2 S-adenosyl-L-homocysteine + H(+). The enzyme catalyses precorrin-2 + NAD(+) = sirohydrochlorin + NADH + 2 H(+). It carries out the reaction siroheme + 2 H(+) = sirohydrochlorin + Fe(2+). It functions in the pathway cofactor biosynthesis; adenosylcobalamin biosynthesis; precorrin-2 from uroporphyrinogen III: step 1/1. It participates in cofactor biosynthesis; adenosylcobalamin biosynthesis; sirohydrochlorin from precorrin-2: step 1/1. The protein operates within porphyrin-containing compound metabolism; siroheme biosynthesis; precorrin-2 from uroporphyrinogen III: step 1/1. Its pathway is porphyrin-containing compound metabolism; siroheme biosynthesis; siroheme from sirohydrochlorin: step 1/1. It functions in the pathway porphyrin-containing compound metabolism; siroheme biosynthesis; sirohydrochlorin from precorrin-2: step 1/1. Functionally, multifunctional enzyme that catalyzes the SAM-dependent methylations of uroporphyrinogen III at position C-2 and C-7 to form precorrin-2 via precorrin-1. Then it catalyzes the NAD-dependent ring dehydrogenation of precorrin-2 to yield sirohydrochlorin. Finally, it catalyzes the ferrochelation of sirohydrochlorin to yield siroheme. The protein is Siroheme synthase 2 of Yersinia pseudotuberculosis serotype O:1b (strain IP 31758).